The following is a 283-amino-acid chain: Thymidylate synthase (283 aa).

Position 22 (R22) interacts with dUMP. The Nucleophile role is filled by C160. DUMP contacts are provided by residues 180 to 183 (RSCD), N191, and 221 to 223 (HIY). D183 contributes to the (6R)-5,10-methylene-5,6,7,8-tetrahydrofolate binding site. S282 provides a ligand contact to (6R)-5,10-methylene-5,6,7,8-tetrahydrofolate.

This sequence belongs to the thymidylate synthase family. Bacterial-type ThyA subfamily. As to quaternary structure, homodimer.

Its subcellular location is the cytoplasm. The enzyme catalyses dUMP + (6R)-5,10-methylene-5,6,7,8-tetrahydrofolate = 7,8-dihydrofolate + dTMP. Its pathway is pyrimidine metabolism; dTTP biosynthesis. In terms of biological role, catalyzes the reductive methylation of 2'-deoxyuridine-5'-monophosphate (dUMP) to 2'-deoxythymidine-5'-monophosphate (dTMP) while utilizing 5,10-methylenetetrahydrofolate (mTHF) as the methyl donor and reductant in the reaction, yielding dihydrofolate (DHF) as a by-product. This enzymatic reaction provides an intracellular de novo source of dTMP, an essential precursor for DNA biosynthesis. The chain is Thymidylate synthase from Pasteurella multocida (strain Pm70).